We begin with the raw amino-acid sequence, 555 residues long: Hydroxylamine reductase (555 aa).

Residues Cys5, Cys8, Cys17, and Cys23 each coordinate [4Fe-4S] cluster. Positions 248, 272, 316, 408, 436, 461, 496, and 498 each coordinate hybrid [4Fe-2O-2S] cluster. Residue Cys408 is modified to Cysteine persulfide.

Belongs to the HCP family. Requires [4Fe-4S] cluster as cofactor. It depends on hybrid [4Fe-2O-2S] cluster as a cofactor.

It localises to the cytoplasm. It carries out the reaction A + NH4(+) + H2O = hydroxylamine + AH2 + H(+). Catalyzes the reduction of hydroxylamine to form NH(3) and H(2)O. This is Hydroxylamine reductase from Natranaerobius thermophilus (strain ATCC BAA-1301 / DSM 18059 / JW/NM-WN-LF).